Here is a 462-residue protein sequence, read N- to C-terminus: Keratin, type I cytoskeletal 28 (462 aa).

A disordered region spans residues 1 to 26 (MSLRFSGGSRHVGIQSGSLRPPSGGA). Residues 1 to 83 (MSLRFSGGSR…GSEGGLLSGN (83 aa)) are head. Residues 84-119 (EKVTMQNLNNRLASYLDNVKALEEANSELERKIKTW) are coil 1A. Positions 84–399 (EKVTMQNLNN…RLIDGDENSC (316 aa)) constitute an IF rod domain. A linker 1 region spans residues 120-141 (HEKYGPGSCRGLDRDYSKYHLT). The segment at 142-233 (IEDLKSKIIS…KNHEEEMKVL (92 aa)) is coil 1B. Residues 234-256 (QCAAGGNVNVEMNAAPGVDLTVL) form a linker 12 region. The coil 2 stretch occupies residues 257–395 (LNNMRAEYEA…ETYCRLIDGD (139 aa)). Positions 396–462 (ENSCSVSKGF…NGKAEQRVPF (67 aa)) are tail.

The protein belongs to the intermediate filament family. In terms of assembly, heterotetramer of two type I and two type II keratins. In terms of tissue distribution, in the hair follicle and bulb, uniformly expressed in all three layers of the inner root sheath (the Henle layer, the Huxley layer and the cuticle) and observed in matrix cells (at protein level).

Its subcellular location is the cytoplasm. Functionally, essential for the proper assembly of types I and II keratin protein complexes and the formation of keratin intermediate filaments in the inner root sheath (irs). The chain is Keratin, type I cytoskeletal 28 from Mus musculus (Mouse).